We begin with the raw amino-acid sequence, 608 residues long: ATP-citrate synthase beta chain protein 2 (608 aa).

Residues 214 to 234 (ILRF…ELGG) and 265 to 291 (FKSE…KNQA) each bind ATP. Position 231 (Glu231) interacts with Mg(2+). The Tele-phosphohistidine intermediate role is filled by His273. A CoA-binding site is contributed by 292–302 (LIDAGAIVPTS).

It belongs to the succinate/malate CoA ligase alpha subunit family. Heterooctamer of 4 alpha and 4 beta chains. In terms of tissue distribution, expressed in trichomes, epidermal leaf cells, anther tapetal cells, stigma and in young vascular bundles of expanding leaves, cotyledons, roots, pedicel of flowers and siliques.

It is found in the cytoplasm. The protein localises to the cytosol. It carries out the reaction oxaloacetate + acetyl-CoA + ADP + phosphate = citrate + ATP + CoA. Its function is as follows. ATP citrate-lyase is the primary enzyme responsible for the synthesis of cytosolic acetyl-CoA, used for the elongation of fatty acids and biosynthesis of isoprenoids, flavonoids and malonated derivatives. May supply substrate to the cytosolic acetyl-CoA carboxylase, which generates the malonyl-CoA used for the synthesis of a multitude of compounds, including very long chain fatty acids and flavonoids. Required for normal growth and development and elongation of C18 fatty acids to C20 to C24 fatty acids in seeds. n contrast to all known animal ACL enzymes having a homomeric structure, plant ACLs are composed of alpha and beta chains. The sequence is that of ATP-citrate synthase beta chain protein 2 from Arabidopsis thaliana (Mouse-ear cress).